A 621-amino-acid chain; its full sequence is 1-deoxy-D-xylulose-5-phosphate synthase (621 aa).

Thiamine diphosphate-binding positions include histidine 80 and 121–123 (GHS). Aspartate 152 serves as a coordination point for Mg(2+). Thiamine diphosphate-binding positions include 153 to 154 (GA), asparagine 181, tyrosine 288, and glutamate 370. Asparagine 181 contributes to the Mg(2+) binding site.

This sequence belongs to the transketolase family. DXPS subfamily. Homodimer. The cofactor is Mg(2+). Thiamine diphosphate serves as cofactor.

It catalyses the reaction D-glyceraldehyde 3-phosphate + pyruvate + H(+) = 1-deoxy-D-xylulose 5-phosphate + CO2. The protein operates within metabolic intermediate biosynthesis; 1-deoxy-D-xylulose 5-phosphate biosynthesis; 1-deoxy-D-xylulose 5-phosphate from D-glyceraldehyde 3-phosphate and pyruvate: step 1/1. Its function is as follows. Catalyzes the acyloin condensation reaction between C atoms 2 and 3 of pyruvate and glyceraldehyde 3-phosphate to yield 1-deoxy-D-xylulose-5-phosphate (DXP). In Vibrio vulnificus (strain CMCP6), this protein is 1-deoxy-D-xylulose-5-phosphate synthase.